Here is a 265-residue protein sequence, read N- to C-terminus: Aquaporin-5 (265 aa).

Topologically, residues 1–12 are cytoplasmic; that stretch reads MKKEVCSLAFFK. Residues 13 to 33 form a helical membrane-spanning segment; that stretch reads AVFAEFLATLIFVFFGLGSAL. Residues 34–39 lie on the Extracellular side of the membrane; the sequence is KWPSAL. A helical membrane pass occupies residues 40 to 60; sequence PTILQISIAFGLAIGTLAQAL. Residues 61–65 lie on the Cytoplasmic side of the membrane; it reads GPVSG. An intramembrane region (discontinuously helical) is located at residues 66 to 74; it reads GHINPAITL. The short motif at 69 to 71 is the NPA 1 element; the sequence is NPA. The Cytoplasmic segment spans residues 75 to 87; it reads ALLIGNQISLLRA. The chain crosses the membrane as a helical span at residues 88–108; it reads VFYVAAQLVGAIAGAGILYWL. Residues 109-126 lie on the Extracellular side of the membrane; that stretch reads APLNARGNLAVNALNNNT. A glycan (N-linked (GlcNAc...) asparagine) is linked at Asn124. The helical transmembrane segment at 127–147 threads the bilayer; the sequence is TPGKAMVVELILTFQLALCIF. Residues 148-158 are Cytoplasmic-facing; it reads SSTDSRRTSPV. The helical transmembrane segment at 159 to 179 threads the bilayer; the sequence is GSPALSIGLSVTLGHLVGIYF. Position 180 (Thr180) is a topological domain, extracellular. The segment at residues 181–191 is an intramembrane region (discontinuously helical); sequence GCSMNPARSFG. The NPA 2 signature appears at 185–187; that stretch reads NPA. Topologically, residues 192-203 are extracellular; the sequence is PAVVMNRFSPSH. A helical membrane pass occupies residues 204–224; that stretch reads WVFWVGPIVGAMLAAILYFYL. At 225–265 the chain is on the cytoplasmic side; that stretch reads LFPSSLSLHDRVAVVKGTYEPEEDWEDHREERKKTIELTAH.

It belongs to the MIP/aquaporin (TC 1.A.8) family. As to quaternary structure, homotetramer; each monomer provides an independent water pore. Interacts with TRPV4; the interaction is probably indirect and regulates TRPV4 activation by hypotonicity. In terms of tissue distribution, salivary glands, lacrimal glands, corneal epithelium in eye, trachea and lung.

The protein resides in the apical cell membrane. It localises to the cell membrane. It is found in the cytoplasmic vesicle membrane. It catalyses the reaction H2O(in) = H2O(out). Its function is as follows. Aquaporins form homotetrameric transmembrane channels, with each monomer independently mediating water transport across the plasma membrane along its osmotic gradient. Plays an important role in fluid secretion in salivary glands. Required for TRPV4 activation by hypotonicity. Together with TRPV4, controls regulatory volume decrease in salivary epithelial cells. Seems to play a redundant role in water transport in the eye, lung and in sweat glands. This Rattus norvegicus (Rat) protein is Aquaporin-5.